Here is a 93-residue protein sequence, read N- to C-terminus: MLRGEIWQVDLDPARGSAANMRRPAVIVSNDRANAAAIRLDRGVVPVVPVTSNTEKVPIPGVVAGSERWPGRRFEGAGPAGWIRRCATSPLPS.

The protein belongs to the PemK/MazF family. Forms a complex with cognate antitoxin MazE1.

Its function is as follows. Toxic component of a type II toxin-antitoxin (TA) system, its cognate antitoxin is MazE1. Probably an endoribonuclease. This chain is Probable endoribonuclease MazF1 (mazF1), found in Mycobacterium tuberculosis (strain ATCC 25618 / H37Rv).